The sequence spans 752 residues: Pentatricopeptide repeat-containing protein At5g13270, chloroplastic (752 aa).

The transit peptide at Met-1–Ser-80 directs the protein to the chloroplast. PPR repeat units follow at residues Gln-47–Val-81, Ser-82–Pro-116, Ser-117–Leu-147, Asn-148–Pro-182, Pro-183–Ser-217, Asn-218–Lys-248, Lys-249–Trp-283, Asp-284–Ser-318, Glu-319–Pro-349, Asn-350–Ile-384, Asn-386–Gly-420, Ser-421–Pro-451, Asp-452–Pro-486, Asn-487–Pro-522, and Thr-523–Glu-553. Residues Ser-558 to Lys-633 form a type E motif region. The segment at Gly-634–Glu-664 is type E(+) motif. Residues Gly-665–Trp-752 form a type DYW motif region.

Belongs to the PPR family. PCMP-H subfamily.

The protein localises to the plastid. The protein resides in the chloroplast. The polypeptide is Pentatricopeptide repeat-containing protein At5g13270, chloroplastic (PCMP-H90) (Arabidopsis thaliana (Mouse-ear cress)).